A 993-amino-acid chain; its full sequence is Isoleucine--tRNA ligase (993 aa).

A 'HIGH' region motif is present at residues 64–74 (PYANGNIHIGH). Glutamate 621 is an L-isoleucyl-5'-AMP binding site. Positions 662-666 (KMSKS) match the 'KMSKS' region motif. Lysine 665 is a binding site for ATP.

The protein belongs to the class-I aminoacyl-tRNA synthetase family. IleS type 1 subfamily. As to quaternary structure, monomer.

Its subcellular location is the cytoplasm. The enzyme catalyses tRNA(Ile) + L-isoleucine + ATP = L-isoleucyl-tRNA(Ile) + AMP + diphosphate. Functionally, catalyzes the attachment of isoleucine to tRNA(Ile). As IleRS can inadvertently accommodate and process structurally similar amino acids such as valine, to avoid such errors it has two additional distinct tRNA(Ile)-dependent editing activities. One activity is designated as 'pretransfer' editing and involves the hydrolysis of activated Val-AMP. The other activity is designated 'posttransfer' editing and involves deacylation of mischarged Val-tRNA(Ile). The chain is Isoleucine--tRNA ligase from Mesorhizobium japonicum (strain LMG 29417 / CECT 9101 / MAFF 303099) (Mesorhizobium loti (strain MAFF 303099)).